The sequence spans 138 residues: MGGLVYFSSGSGNTARFVTRLGLPAGRIPISPRDEMPAPALPYVLICPTYADGMGRGAVPKQVIRFLNDPDRRALLRGVIATGNRNFGATYALAGRVISDKCNVPVLYRFELAGTDLDISRVQAGLAKFWGTECLTMA.

Belongs to the NrdI family.

In terms of biological role, probably involved in ribonucleotide reductase function. This is Protein NrdI from Paracoccus denitrificans (strain Pd 1222).